Reading from the N-terminus, the 367-residue chain is MASSSTAYYLKDAGFHIRNIPKAWNDWNLFHVFQNFGKVSYCRVVGQSNDGQVQLGFVNMMSVADADEVRKNLNDGNLIGENFTLKVTDHKNVGGSLLPMASNSVQKLVSSPPSKSGPVLLSSSWLPLNKDIEVEVVDYLPSSSVAPDLFALTLLRINDSSMKEKYDSMHEKMNAYAQIVPFDSELEIGYDGVFRDAPRSVRRVRRISATKLYLVDFGKIINYEKAKCFQLPKVFQSMPTRVSLCGLDGLTWSPVAIPSFDNIREVVKKWGQMENSTLHAMACGFQGSINMINLFCGKSILADRLQRKGVCEYLPRSQQPHYAYSRETLLQHNNSGVTAQISNDADVVKDLLKKIDGVKNMLRELEL.

Residues 13-92 (AGFHIRNIPK…FTLKVTDHKN (80 aa)) form the RRM domain. Positions 298–345 (KSILADRLQRKGVCEYLPRSQQPHYAYSRETLLQHNNSGVTAQISNDA) are required for ife-3 interaction.

Component of the pid-1 variant of the PETISCO complex (also called the pid-3, erh-2, tofu-6, and ife-3 small RNA complex) containing at least pid-1, tofu-6, ife-3, pid-3, and erh-2, which is required for the biogenesis of 21 nucleotide PIWI-interacting RNAs (piRNAs) that possess a uracil residue at the 5'-end (also called 21U-RNAs). Within the pid-1 variant of the PETISCO complex interacts with pid-1. Component of the tost-1 variant of the PETISCO complex (also called the pid-3, erh-2, tofu-6, and ife-3 small RNA complex) containing at least tost-1, tofu-6, ife-3, pid-3, and erh-2, which plays an essential role in embryogenesis. Within the tost-1 variant of the PETISCO complex interacts with tost-1. Within the pid-1 and tost-1 variants of the PETISCO complexes interacts (via C-terminus) with ife-3. Within the pid-1 and tost-1 variants of the PETISCO complexes interacts (via the RRM domain) with pid-3. Within the pid-1 and tost-1 variants of the PETISCO complexes interacts (via the RRM domain) with erh-2. In contrast to the pid-1 variant of the PETISCO complex, the tost-1 variant of the PETISCO complex plays a minor role in the biogenesis of 21U-RNAs. Interacts (via residues 120-314) with the PUCH complex subunit tofu-1 (via residues 82-172); the interaction between the PETISCO and PUCH complex members enhances piRNA production in vivo. Expression is restricted to the germline (at protein level).

Its subcellular location is the cytoplasm. The protein resides in the perinuclear region. It is found in the nucleus. Functionally, component of the pid-1 and tost-1 variants of the PETISCO complexes, which have roles in the biogenesis of a class of 21 nucleotide PIWI-interacting RNAs (piRNAs) that possess a uracil residue at the 5'-end (also called 21U-RNAs) and embryogenesis, respectively. Promotes the biogenesis of 21U-RNAs. Mediates the interaction between the PETISCO complex and the PUCH complex, the endoribonuclease complex processing the 5'-end of precursor piRNAs, thereby enhancing mature piRNA production. Required for chromosome segregation and cell division in early embryos. May have a role in DNA replication. This Caenorhabditis elegans protein is Embryonic developmental protein tofu-6.